The sequence spans 343 residues: Uroporphyrinogen decarboxylase (343 aa).

Substrate is bound by residues 23–27, Asp-73, Tyr-150, Ser-205, and His-322; that span reads RQAGR.

Belongs to the uroporphyrinogen decarboxylase family. In terms of assembly, homodimer.

It localises to the cytoplasm. The enzyme catalyses uroporphyrinogen III + 4 H(+) = coproporphyrinogen III + 4 CO2. It functions in the pathway porphyrin-containing compound metabolism; protoporphyrin-IX biosynthesis; coproporphyrinogen-III from 5-aminolevulinate: step 4/4. Functionally, catalyzes the decarboxylation of four acetate groups of uroporphyrinogen-III to yield coproporphyrinogen-III. In Cereibacter sphaeroides (strain ATCC 17029 / ATH 2.4.9) (Rhodobacter sphaeroides), this protein is Uroporphyrinogen decarboxylase.